The primary structure comprises 261 residues: Carbonic anhydrase 1 (261 aa).

The segment at 1-40 (MASPDWGYDDKNGPEQWSKLYPIANGNNQSPVDIKTSETK) is disordered. At alanine 2 the chain carries N-acetylalanine. In terms of domain architecture, Alpha-carbonic anhydrase spans 4 to 261 (PDWGYDDKNG…LKGRTVRASF (258 aa)). The Proton donor/acceptor role is filled by histidine 65. The Zn(2+) site is built by histidine 95, histidine 97, and histidine 120. Residues threonine 200 and 200–201 (TH) each bind substrate. Residues 241–261 (PMQHNNRPTQPLKGRTVRASF) are disordered.

It belongs to the alpha-carbonic anhydrase family. Zn(2+) is required as a cofactor.

The protein localises to the cytoplasm. The enzyme catalyses hydrogencarbonate + H(+) = CO2 + H2O. The catalysed reaction is urea = cyanamide + H2O. With respect to regulation, inhibited by acetazolamide. Its function is as follows. Catalyzes the reversible hydration of carbon dioxide. Can hydrate cyanamide to urea. This Pan troglodytes (Chimpanzee) protein is Carbonic anhydrase 1 (CA1).